The primary structure comprises 214 residues: MSLGLVGRKVGMTRIFTDDGDSIPVTVVEVGDNRVTQIKTDETDGYTAVQVTFGSRRASRVTKPLAGHLAKAGVEAGEVIKEFRIDAAKAAELQAGSSLSVDLFQVGQKIDVQGVSIGKGYAGTIKRHHFASGRATHGNSRSHNVPGSIGMAQDPGRVFPGKRMTGHLGDATRTVQNLEIAKIDAERKLLLVKGAIPGSKGGKVIVTPAVKAKA.

The segment at 133-153 (GRATHGNSRSHNVPGSIGMAQ) is disordered. Q153 is subject to N5-methylglutamine.

This sequence belongs to the universal ribosomal protein uL3 family. Part of the 50S ribosomal subunit. Forms a cluster with proteins L14 and L19. In terms of processing, methylated by PrmB.

In terms of biological role, one of the primary rRNA binding proteins, it binds directly near the 3'-end of the 23S rRNA, where it nucleates assembly of the 50S subunit. The sequence is that of Large ribosomal subunit protein uL3 from Cupriavidus metallidurans (strain ATCC 43123 / DSM 2839 / NBRC 102507 / CH34) (Ralstonia metallidurans).